The following is a 580-amino-acid chain: Kelch-like protein 38 (580 aa).

The 68-residue stretch at 34 to 101 (TDVSICSGAC…VYTGEVHISA (68 aa)) folds into the BTB domain. The BACK domain maps to 136–237 (CLGLVRLAEI…HPAFFHHFIA (102 aa)). Kelch repeat units lie at residues 284-331 (FLLL…TLHR), 333-382 (VYVL…THRN), 383-430 (FIFS…VKDQ), 432-478 (LYLF…VLGE), 479-520 (KIII…VMGN), and 522-572 (LYVT…TLQC).

In Rattus norvegicus (Rat), this protein is Kelch-like protein 38 (Klhl38).